A 158-amino-acid chain; its full sequence is Transcriptional regulatory protein DoeX (158 aa).

One can recognise an HTH asnC-type domain in the interval 3-64 (LDRYDLKILE…RLNTDVLVKR (62 aa)). The segment at residues 22-41 (KSKLAEAINLSVSPCWERVR) is a DNA-binding region (H-T-H motif).

The protein localises to the cytoplasm. Its function is as follows. Acts as a transcriptional regulator. It binds DNA specifically to a fragment from the doeA promoter region. This is Transcriptional regulatory protein DoeX (doeX) from Halomonas elongata (strain ATCC 33173 / DSM 2581 / NBRC 15536 / NCIMB 2198 / 1H9).